We begin with the raw amino-acid sequence, 308 residues long: Aspartate carbamoyltransferase catalytic subunit (308 aa).

Residues Arg57 and Thr58 each coordinate carbamoyl phosphate. Lys86 contributes to the L-aspartate binding site. Carbamoyl phosphate-binding residues include Arg107, His135, and Gln138. Residues Arg168 and Arg229 each coordinate L-aspartate. Carbamoyl phosphate-binding residues include Leu268 and Pro269.

Belongs to the aspartate/ornithine carbamoyltransferase superfamily. ATCase family. Heterooligomer of catalytic and regulatory chains.

The catalysed reaction is carbamoyl phosphate + L-aspartate = N-carbamoyl-L-aspartate + phosphate + H(+). Its pathway is pyrimidine metabolism; UMP biosynthesis via de novo pathway; (S)-dihydroorotate from bicarbonate: step 2/3. Catalyzes the condensation of carbamoyl phosphate and aspartate to form carbamoyl aspartate and inorganic phosphate, the committed step in the de novo pyrimidine nucleotide biosynthesis pathway. This Pyrococcus horikoshii (strain ATCC 700860 / DSM 12428 / JCM 9974 / NBRC 100139 / OT-3) protein is Aspartate carbamoyltransferase catalytic subunit.